The chain runs to 91 residues: Small ribosomal subunit protein uS15 (91 aa).

The protein belongs to the universal ribosomal protein uS15 family. As to quaternary structure, part of the 30S ribosomal subunit. Forms a bridge to the 50S subunit in the 70S ribosome, contacting the 23S rRNA.

Its function is as follows. One of the primary rRNA binding proteins, it binds directly to 16S rRNA where it helps nucleate assembly of the platform of the 30S subunit by binding and bridging several RNA helices of the 16S rRNA. Functionally, forms an intersubunit bridge (bridge B4) with the 23S rRNA of the 50S subunit in the ribosome. This chain is Small ribosomal subunit protein uS15, found in Deinococcus geothermalis (strain DSM 11300 / CIP 105573 / AG-3a).